A 248-amino-acid polypeptide reads, in one-letter code: Putative glutamine amidotransferase-like protein C13C5.04 (248 aa).

The 205-residue stretch at 13–217 (PMVEITSAYG…VKVLRGTEVF (205 aa)) folds into the Glutamine amidotransferase type-1 domain.

This is Putative glutamine amidotransferase-like protein C13C5.04 from Schizosaccharomyces pombe (strain 972 / ATCC 24843) (Fission yeast).